A 110-amino-acid chain; its full sequence is Coiled-coil-helix-coiled-coil-helix domain-containing protein 5 (110 aa).

An N-acetylmethionine modification is found at Met-1. CHCH domains follow at residues 9 to 52 and 55 to 97; these read ARYC…PIIR and RQAC…QPPS. 4 short sequence motifs (cx9C motif) span residues 12-22, 34-44, 58-68, and 79-89; these read CSRELDQYGQC, CHHLKMSIARC, CAEPFEAFEKC, and CAEHMRRFLQC. 4 disulfides stabilise this stretch: Cys-12–Cys-44, Cys-22–Cys-34, Cys-58–Cys-89, and Cys-68–Cys-79.

As to quaternary structure, monomer.

The protein localises to the mitochondrion intermembrane space. In Mus musculus (Mouse), this protein is Coiled-coil-helix-coiled-coil-helix domain-containing protein 5 (Chchd5).